Reading from the N-terminus, the 1012-residue chain is Probable inorganic carbon transporter subunit DabA (1012 aa).

4 residues coordinate Zn(2+): C489, D491, H679, and C694.

It belongs to the inorganic carbon transporter (TC 9.A.2) DabA family. Forms a complex with DabB. Zn(2+) serves as cofactor.

The protein localises to the cell inner membrane. Its function is as follows. Part of an energy-coupled inorganic carbon pump. The sequence is that of Probable inorganic carbon transporter subunit DabA from Dechloromonas aromatica (strain RCB).